The primary structure comprises 377 residues: Nucleosome assembly protein 1;3 (377 aa).

Residues 26-80 (VNVLKNKLQGLTGKHSNVLENLSPNVRKRVEVLREIQTQHDELEAKFFEERAALE) adopt a coiled-coil conformation. A Nuclear export signal motif is present at residues 47 to 62 (LSPNVRKRVEVLREIQ). The Nuclear localization signal motif lies at 223–228 (KKKPKK). A disordered region spans residues 298–377 (EAAQDEDYID…GERPPECKQQ (80 aa)). Residues 300-341 (AQDEDYIDLEDDEDEEDDEDEDEDEEDEEEEDEDEDDDDEDE) are compositionally biased toward acidic residues. The span at 345–357 (KTKKKSSAGRKRS) shows a compositional bias: basic residues. Residue Cys374 is modified to Cysteine methyl ester. Cys374 is lipidated: S-farnesyl cysteine. Residues 375-377 (KQQ) constitute a propeptide, removed in mature form.

The protein belongs to the nucleosome assembly protein (NAP) family. Can form homomeric and heteromeric protein complexes with NAP1;4. Binds histones H2A and H2B in vivo. Also able to bind histones H1 and H4 in vitro. Interacts with CYCB1;1 and with alpha tubulin.

It is found in the nucleus. The protein resides in the cytoplasm. Its function is as follows. May modulate chromatin structure by regulation of nucleosome assembly/disassembly. Could function together with B-type cyclins in the regulation of microtubule dynamics. The polypeptide is Nucleosome assembly protein 1;3 (NAP1;3) (Nicotiana tabacum (Common tobacco)).